The chain runs to 252 residues: NAC domain-containing protein 23 (252 aa).

The region spanning 12-177 (MPPGFRFQPT…EMVLCRISNK (166 aa)) is the NAC domain. A DNA-binding region spans residues 110 to 183 (TAVKRRFVFY…ISNKDLPKPP (74 aa)). Residues 225–252 (VDDAAAGTDDPGDLDEEIDDSMQRNHGG) are disordered. Residues 234–244 (DPGDLDEEIDD) are compositionally biased toward acidic residues.

Forms heterodimers with NAC26. Expressed in stems and panicles. Expressed in developing endosperm.

It localises to the nucleus. The protein localises to the cytoplasm. Transcription factor involved in the regulation of seed size. Binds to DNA-specific sequences of CLPD1 and OAT promoters in vitro. This Oryza sativa subsp. japonica (Rice) protein is NAC domain-containing protein 23.